Reading from the N-terminus, the 406-residue chain is Tryptophan synthase beta chain (406 aa).

The residue at position 99 (Lys-99) is an N6-(pyridoxal phosphate)lysine.

This sequence belongs to the TrpB family. In terms of assembly, tetramer of two alpha and two beta chains. Pyridoxal 5'-phosphate serves as cofactor.

The catalysed reaction is (1S,2R)-1-C-(indol-3-yl)glycerol 3-phosphate + L-serine = D-glyceraldehyde 3-phosphate + L-tryptophan + H2O. The protein operates within amino-acid biosynthesis; L-tryptophan biosynthesis; L-tryptophan from chorismate: step 5/5. In terms of biological role, the beta subunit is responsible for the synthesis of L-tryptophan from indole and L-serine. This chain is Tryptophan synthase beta chain, found in Sinorhizobium fredii (strain NBRC 101917 / NGR234).